A 309-amino-acid polypeptide reads, in one-letter code: Probable copper-dependent oxygenase clz3 (309 aa).

Residues asparagine 9 and asparagine 249 are each glycosylated (N-linked (GlcNAc...) asparagine). A helical membrane pass occupies residues 257–277 (FAVPLAAIAFIALIISGGYVI).

Belongs to the clz3 oxygenase family.

The protein resides in the membrane. Its pathway is secondary metabolite biosynthesis. Functionally, probable copper-dependent oxygenase; part of the gene cluster that mediates the biosynthesis of squalestatin S1 (SQS1, also known as zaragozic acid A), a heavily oxidized fungal polyketide that offers potent cholesterol lowering activity by targeting squalene synthase (SS). SQS1 is composed of a 2,8-dioxobicyclic[3.2.1]octane-3,4,5-tricarboxyclic acid core that is connected to two lipophilic polyketide arms. These initial steps feature the priming of an unusual benzoic acid starter unit onto the highly reducing polyketide synthase clz14, followed by oxaloacetate extension and product release to generate a tricarboxylic acid containing product. The phenylalanine ammonia lyase (PAL) clz10 and the acyl-CoA ligase clz12 are involved in transforming phenylalanine into benzoyl-CoA. The citrate synthase-like protein clz17 is involved in connecting the C-alpha-carbons of the hexaketide chain and oxaloacetate to afford the tricarboxylic acid unit. The potential hydrolytic enzymes, clz11 and clz13, are in close proximity to pks2 and may participate in product release. On the other side, the tetraketide arm is synthesized by a the squalestatin tetraketide synthase clz2 and enzymatically esterified to the core in the last biosynthetic step, by the acetyltransferase clz6. The biosynthesis of the tetraketide must involve 3 rounds of chain extension. After the first and second rounds methyl-transfer occurs, and in all rounds of extension the ketoreductase and dehydratase are active. The enoyl reductase and C-MeT of clz2 are not active in the final round of extension. The acetyltransferase clz6 appears to have a broad substrate selectivity for its acyl CoA substrate, allowing the in vitro synthesis of novel squalestatins. The biosynthesis of SQS1 requires several oxidative steps likely performed by oxidoreductases clz3, clz15 and clz16. Finally, in support of the identification of the cluster as being responsible for SQS1 production, the cluster contains a gene encoding a putative squalene synthase (SS) clz20, suggesting a likely mechanism for self-resistance. The polypeptide is Probable copper-dependent oxygenase clz3 (Cochliobolus lunatus (Filamentous fungus)).